The following is an 87-amino-acid chain: Cytochrome c6 (87 aa).

4 residues coordinate heme c: Cys14, Cys17, His18, and Met58.

Belongs to the cytochrome c family. PetJ subfamily. As to quaternary structure, monomer. Post-translationally, binds 1 heme c group covalently per subunit.

Its subcellular location is the cellular thylakoid lumen. Functions as an electron carrier between membrane-bound cytochrome b6-f and photosystem I in oxygenic photosynthesis. The polypeptide is Cytochrome c6 (petJ) (Parathermosynechococcus lividus (Thermostichus lividus)).